The following is a 265-amino-acid chain: TATA-box-binding protein (265 aa).

The tract at residues 1 to 40 is disordered; sequence MYNPSQAVPVSLHKNQDNQDGGQQRSHYPQISSQQSQSYL. Residues 18-29 show a composition bias toward polar residues; the sequence is NQDGGQQRSHYP. 2 consecutive repeat copies span residues 91–167 and 181–258.

The protein belongs to the TBP family. Belongs to the TFIID complex together with the TBP-associated factors (TAFs). Binds DNA as monomer.

The protein localises to the nucleus. In terms of biological role, general transcription factor that functions at the core of the DNA-binding multiprotein factor TFIID. Binding of TFIID to the TATA box is the initial transcriptional step of the pre-initiation complex (PIC), playing a role in the activation of eukaryotic genes transcribed by RNA polymerase II. The protein is TATA-box-binding protein of Strongylocentrotus purpuratus (Purple sea urchin).